The chain runs to 63 residues: Acrosin inhibitor 1 (63 aa).

Residues 8 to 63 (FGFPPDCKVYTEACTREYNPICDSAAKTYSNECTFCNEKMNNDADIHFNHFGECEY) enclose the Kazal-like domain. Cystine bridges form between Cys14-Cys43, Cys21-Cys40, and Cys29-Cys61.

Seminal plasma.

Its subcellular location is the secreted. Its function is as follows. Strong inhibitor of acrosin. The chain is Acrosin inhibitor 1 from Bos taurus (Bovine).